A 352-amino-acid polypeptide reads, in one-letter code: Zinc finger protein 185 (352 aa).

2 disordered regions span residues 1–73 and 86–121; these read MTTE…ELQS and DVLP…ITPP. Serine 18 carries the post-translational modification Phosphoserine. The segment covering 61–72 has biased composition (polar residues); that stretch reads KKTTSSPTQELQ. Threonine 137 carries the phosphothreonine modification. Over residues 251 to 268 the composition is skewed to polar residues; that stretch reads VSSGKPVSSHCDSPSSIE. The tract at residues 251–287 is disordered; the sequence is VSSGKPVSSHCDSPSSIEDSLDLAKKPPHEGTPSERP. Over residues 272–287 the composition is skewed to basic and acidic residues; that stretch reads DLAKKPPHEGTPSERP. One can recognise an LIM zinc-binding domain in the interval 292–347; it reads CTYCSHEIQDCPKITLEHLGICCHEYCFKCGICNKPMGDLLDQIFIHRDTIHCGKC.

As to expression, expressed in skin, kidney, ovary, testis. Also expressed in brain, cartilage, heart, lung, spleen and thymus.

The protein resides in the cytoplasm. The protein localises to the cytoskeleton. It localises to the cell junction. Its subcellular location is the focal adhesion. Its function is as follows. May be involved in the regulation of cellular proliferation and/or differentiation. The polypeptide is Zinc finger protein 185 (Znf185) (Mus musculus (Mouse)).